Consider the following 205-residue polypeptide: Holliday junction branch migration complex subunit RuvA (205 aa).

Positions 1–64 (MIGRLRGLLV…EDAQLLYGFI (64 aa)) are domain I. Residues 65–143 (TKQERALFRL…SLMEASHGNE (79 aa)) form a domain II region. The flexible linker stretch occupies residues 144–156 (REFVLQSNYTPAP). The interval 157 to 205 (VVNTAEEDAISALLALGYKPAQASKAVSSVFEEGMDSETLIKASLKSML) is domain III.

This sequence belongs to the RuvA family. In terms of assembly, homotetramer. Forms an RuvA(8)-RuvB(12)-Holliday junction (HJ) complex. HJ DNA is sandwiched between 2 RuvA tetramers; dsDNA enters through RuvA and exits via RuvB. An RuvB hexamer assembles on each DNA strand where it exits the tetramer. Each RuvB hexamer is contacted by two RuvA subunits (via domain III) on 2 adjacent RuvB subunits; this complex drives branch migration. In the full resolvosome a probable DNA-RuvA(4)-RuvB(12)-RuvC(2) complex forms which resolves the HJ.

It is found in the cytoplasm. The RuvA-RuvB-RuvC complex processes Holliday junction (HJ) DNA during genetic recombination and DNA repair, while the RuvA-RuvB complex plays an important role in the rescue of blocked DNA replication forks via replication fork reversal (RFR). RuvA specifically binds to HJ cruciform DNA, conferring on it an open structure. The RuvB hexamer acts as an ATP-dependent pump, pulling dsDNA into and through the RuvAB complex. HJ branch migration allows RuvC to scan DNA until it finds its consensus sequence, where it cleaves and resolves the cruciform DNA. The chain is Holliday junction branch migration complex subunit RuvA from Shewanella loihica (strain ATCC BAA-1088 / PV-4).